A 200-amino-acid chain; its full sequence is HTH-type transcriptional repressor KstR2 (200 aa).

The region spanning 9–69 (NSRRGELLEL…ELLRGFLDWL (61 aa)) is the HTH tetR-type domain. The H-T-H motif DNA-binding region spans 32–51 (TVRDIADGAGILSGSLYHHF).

As to quaternary structure, homodimer.

Controls the expression of a small regulon that may play a role in the utilization of cholesterol. This Mycobacterium tuberculosis (strain CDC 1551 / Oshkosh) protein is HTH-type transcriptional repressor KstR2 (kstR2).